Consider the following 189-residue polypeptide: FUN14 domain-containing protein 2 (189 aa).

Residues 1-80 (METSAPRAGS…GQESGPSAEK (80 aa)) are Cytoplasmic-facing. S10 and S53 each carry phosphoserine. A helical membrane pass occupies residues 81–101 (YSVATQLFIGGVTGWCTGFIF). The Mitochondrial intermembrane segment spans residues 102–107 (QNVGKL). A helical membrane pass occupies residues 108–128 (AATAVGGGFFLLQLANHTGYI). At 129-164 (KVDWQRVEKDMKKAKEQLKIRKSNQMPTEVRSKAEE) the chain is on the cytoplasmic side. Residue S151 is modified to Phosphoserine. A helical transmembrane segment spans residues 165 to 185 (VVSFVKKNVLVTGGFFGGFLL). Residues 186–189 (GMAS) lie on the Mitochondrial intermembrane side of the membrane.

Belongs to the FUN14 family.

The protein resides in the mitochondrion outer membrane. Its subcellular location is the nucleus. Binds directly and specifically 1,2-Diacyl-sn-glycero-3-phospho-(1'-myo-inositol-3',4',5'-bisphosphate) (PIP3) leading to the recruitment of PIP3 to mitochondria and may play a role in the regulation of the platelet activation via AKT/GSK3B/cGMP signaling pathways. May act as transcription factor that regulates SREBP1 (isoform SREBP-1C) expression in order to modulate triglyceride (TG) homeostasis in hepatocytes. This Macaca mulatta (Rhesus macaque) protein is FUN14 domain-containing protein 2.